Reading from the N-terminus, the 90-residue chain is Putative sodium channel toxin Ts28 (90 aa).

Residues 1–23 form the signal peptide; the sequence is MKISLVTWLITALCLMEIEEIDG. In terms of domain architecture, LCN-type CS-alpha/beta spans 26 to 86; the sequence is PGNYPVDFQG…FWDVMKKQCD (61 aa). 3 cysteine pairs are disulfide-bonded: C40–C60, C46–C65, and C50–C67.

The protein belongs to the long (3 C-C) scorpion toxin superfamily. In terms of assembly, monomer (edited version) and heterodimer (non-edited version) of this alpha chain and a beta chain (AC P0CI43). As to expression, expressed by the venom gland.

The protein resides in the secreted. Its function is as follows. The edited BmKBTx-like may modulate voltage-gated sodium channels (Nav). The non-edited form is able to form a heterodimer. In orthologs, a heterodimer with LVP beta-chain induces lipolysis in rat adipocytes, which is mediated through the beta-2 adrenergic receptor pathway (ADRB2). Since no LVP beta-chains have been identified in the venom of this scorpion, it is possible that this protein is not involved in a lipolysis process. The polypeptide is Putative sodium channel toxin Ts28 (Tityus serrulatus (Brazilian scorpion)).